Reading from the N-terminus, the 692-residue chain is Elongation factor G (692 aa).

Residues 8-283 (NRIRNIGIAA…AVIDYLPAPT (276 aa)) enclose the tr-type G domain. GTP is bound by residues 17–24 (AHIDAGKT), 81–85 (DTPGH), and 135–138 (NKMD).

Belongs to the TRAFAC class translation factor GTPase superfamily. Classic translation factor GTPase family. EF-G/EF-2 subfamily.

It is found in the cytoplasm. Its function is as follows. Catalyzes the GTP-dependent ribosomal translocation step during translation elongation. During this step, the ribosome changes from the pre-translocational (PRE) to the post-translocational (POST) state as the newly formed A-site-bound peptidyl-tRNA and P-site-bound deacylated tRNA move to the P and E sites, respectively. Catalyzes the coordinated movement of the two tRNA molecules, the mRNA and conformational changes in the ribosome. In Helicobacter pylori (strain J99 / ATCC 700824) (Campylobacter pylori J99), this protein is Elongation factor G (fusA).